Consider the following 151-residue polypeptide: Myosin light polypeptide 6 (151 aa).

Cys-2 carries the post-translational modification N-acetylcysteine. EF-hand domains follow at residues 7-42 (EQTA…LGQN), 84-119 (GCFE…LGEK), and 119-151 (KMTE…VLSG).

As to quaternary structure, myosin is a hexamer of 2 heavy chains and 4 light chains.

Regulatory light chain of myosin. Does not bind calcium. The chain is Myosin light polypeptide 6 (MYL6) from Gallus gallus (Chicken).